The chain runs to 265 residues: MEDKKEEGESEIQEHGPEHWFSKWERQCLAEAEQEDQPEEEAEQSQQKLWHLFQNSATAVAQLYKDRVCQQQGLSLWVPFQNAATAVTNLYKESVDAHQRSFDLGIQIGYQRRNKDVLAWVKKRRRTIRREDLISFLCGKVPPPRNSRAPPRLTVVSPNRATPTETGSSVETDLQPFREAIALHGLSGAMASISVRSSTPGSPTHVSGSSNTGRRRNGLHDVDLNTFISEEMALHLDNGGTRKRTSAQCGDVITDSPTHKRNRMI.

Disordered regions lie at residues 1 to 22 (MEDK…HWFS), 145 to 170 (RNSR…GSSV), 195 to 218 (VRSS…RRNG), and 240 to 265 (GTRK…NRMI). 2 stretches are compositionally biased toward polar residues: residues 156 to 170 (VSPN…GSSV) and 195 to 212 (VRSS…SSNT).

Belongs to the HAPSTR1 family. As to quaternary structure, oligomer.

The protein resides in the nucleus. It localises to the cytoplasm. In terms of biological role, acts as a central player within a network of stress response pathways promoting cellular adaptability. Functions as a negative regulator of TP53/P53 in the cellular response to telomere erosion and probably also DNA damage. This chain is HUWE1-associated protein modifying stress responses, found in Xenopus tropicalis (Western clawed frog).